The sequence spans 339 residues: Enhancer of mRNA-decapping protein 1 (339 aa).

2 disordered regions span residues 1–240 (MMMH…PPRY) and 309–339 (FPVN…SAKK). Residues 13–25 (SPGSENHSNPASR) show a composition bias toward polar residues. 2 stretches are compositionally biased toward basic and acidic residues: residues 26 to 38 (EQSK…ERRL) and 91 to 100 (DNKEKNKKLL). A compositionally biased stretch (low complexity) spans 111–131 (NFSFYSESNSNSNSNVSSNSN). Residues 163-173 (RPDKNGKKGPV) show a composition bias toward basic and acidic residues. Positions 196-212 (FQRTSPKQQANTINDEN) are enriched in polar residues. The segment covering 213–237 (SSPSSSASSVSMSSPRPVAGAVAAP) has biased composition (low complexity).

It belongs to the EDC family.

The protein resides in the cytoplasm. In terms of biological role, mRNA-binding protein which stimulates mRNA decapping. The protein is Enhancer of mRNA-decapping protein 1 (EDC1) of Scheffersomyces stipitis (strain ATCC 58785 / CBS 6054 / NBRC 10063 / NRRL Y-11545) (Yeast).